The sequence spans 197 residues: Probable nicotinate-nucleotide adenylyltransferase (197 aa).

This sequence belongs to the NadD family.

The catalysed reaction is nicotinate beta-D-ribonucleotide + ATP + H(+) = deamido-NAD(+) + diphosphate. The protein operates within cofactor biosynthesis; NAD(+) biosynthesis; deamido-NAD(+) from nicotinate D-ribonucleotide: step 1/1. Catalyzes the reversible adenylation of nicotinate mononucleotide (NaMN) to nicotinic acid adenine dinucleotide (NaAD). In Neisseria meningitidis serogroup C (strain 053442), this protein is Probable nicotinate-nucleotide adenylyltransferase.